We begin with the raw amino-acid sequence, 396 residues long: Acetate kinase (396 aa).

Asn-8 is a binding site for Mg(2+). Lys-15 is an ATP binding site. Residue Arg-89 coordinates substrate. Residue Asp-146 is the Proton donor/acceptor of the active site. ATP-binding positions include 206-210, 281-283, and 329-333; these read HLGNG, DLR, and GIGEN. Residue Glu-382 participates in Mg(2+) binding.

It belongs to the acetokinase family. As to quaternary structure, homodimer. Requires Mg(2+) as cofactor. It depends on Mn(2+) as a cofactor.

It is found in the cytoplasm. The enzyme catalyses acetate + ATP = acetyl phosphate + ADP. It participates in metabolic intermediate biosynthesis; acetyl-CoA biosynthesis; acetyl-CoA from acetate: step 1/2. Its function is as follows. Catalyzes the formation of acetyl phosphate from acetate and ATP. Can also catalyze the reverse reaction. In Geobacillus kaustophilus (strain HTA426), this protein is Acetate kinase.